A 189-amino-acid polypeptide reads, in one-letter code: GMP synthase [glutamine-hydrolyzing] subunit A (189 aa).

Residues 5–189 (KILVVNNYGQ…MNFFEVCDLY (185 aa)) form the Glutamine amidotransferase type-1 domain. Catalysis depends on Cys-79, which acts as the Nucleophile. Active-site residues include His-166 and Glu-168.

In terms of assembly, heterodimer composed of a glutamine amidotransferase subunit (A) and a GMP-binding subunit (B).

The catalysed reaction is XMP + L-glutamine + ATP + H2O = GMP + L-glutamate + AMP + diphosphate + 2 H(+). The protein operates within purine metabolism; GMP biosynthesis; GMP from XMP (L-Gln route): step 1/1. Catalyzes the synthesis of GMP from XMP. This is GMP synthase [glutamine-hydrolyzing] subunit A from Methanosarcina mazei (strain ATCC BAA-159 / DSM 3647 / Goe1 / Go1 / JCM 11833 / OCM 88) (Methanosarcina frisia).